The following is a 401-amino-acid chain: Secreted LysM effector Blys8 (401 aa).

An N-terminal signal peptide occupies residues 1–19; it reads MRTLAIFFIGAAVAAHVSP. The LysM 1 domain maps to 42–89; that stretch reads TYYDEAYDKSYTCDDLLSAWVISKQDFESWNPAVGSDCKLVLGHSYCV. The segment covering 98 to 136 has biased composition (low complexity); that stretch reads STTTTTTTSTTTKTTTKTTTTTTAAPKPTSSAPSGPSPT. Positions 98-137 are disordered; sequence STTTTTTTSTTTKTTTKTTTTTTAAPKPTSSAPSGPSPTQ. The LysM 2 domain occupies 146–193; that stretch reads AYYFVKAGDTCDKISQMYGTFSTAQFIEWNPAVGSSCTGLWAGYYYCV. Positions 201–223 are disordered; that stretch reads SRTSTAGPTSTKPANGVTTPQPT. Residues 233–279 enclose the LysM 3 domain; that stretch reads QFVYVQPGDQCGTVASRAGVSLSDFLQWNPSTGKDCSGLWANAYACV.

This sequence belongs to the secreted LysM effector family.

Functionally, might have a role in sequestration of chitin oligosaccharides (breakdown products of fungal cell walls that are released during invasion and act as triggers of host immunity) to dampen host defense. This is Secreted LysM effector Blys8 from Beauveria bassiana (strain ARSEF 2860) (White muscardine disease fungus).